The primary structure comprises 270 residues: Sorting nexin-11 (270 aa).

One can recognise a PX domain in the interval 16–132; it reads VITVRVQDPR…HLFLQSQLSV (117 aa). Arg59, Lys85, and Arg99 together coordinate a 1,2-diacyl-sn-glycero-3-phospho-(1D-myo-inositol-3-phosphate). Residues 135-139 are important for membrane trafficking; sequence IEACV. A compositionally biased stretch (basic and acidic residues) spans 168-177; it reads SSSHLAKGDQ. The interval 168-203 is disordered; sequence SSSHLAKGDQPKSCCFLPRSGRRSSPSPPPSEEKDH.

This sequence belongs to the sorting nexin family. In terms of assembly, monomer. Interacts with TRPV3; this interaction promotes TRPV3 trafficking from the cell membrane to lysosome for degradation.

The protein resides in the cell membrane. Its subcellular location is the endosome. The protein localises to the cytoplasm. Functionally, phosphoinositide-binding protein involved in protein sorting and membrane trafficking in endosomes. Regulates the levels of TRPV3 by promoting its trafficking from the cell membrane to lysosome for degradation. This is Sorting nexin-11 (SNX11) from Homo sapiens (Human).